Reading from the N-terminus, the 313-residue chain is Protein FixB (313 aa).

Residue 255-283 (LYLAVGISGQIQHMVGANASQTIFAINKD) participates in FAD binding.

It belongs to the ETF alpha-subunit/FixB family. As to quaternary structure, heterodimer of FixA and FixB.

The protein operates within amine and polyamine metabolism; carnitine metabolism. Required for anaerobic carnitine reduction. May bring reductant to CaiA. The polypeptide is Protein FixB (Shigella flexneri).